A 318-amino-acid polypeptide reads, in one-letter code: Pantothenate kinase (318 aa).

96-103 (GSVAVGKS) serves as a coordination point for ATP.

The protein belongs to the prokaryotic pantothenate kinase family.

The protein localises to the cytoplasm. It carries out the reaction (R)-pantothenate + ATP = (R)-4'-phosphopantothenate + ADP + H(+). It participates in cofactor biosynthesis; coenzyme A biosynthesis; CoA from (R)-pantothenate: step 1/5. The polypeptide is Pantothenate kinase (Bradyrhizobium diazoefficiens (strain JCM 10833 / BCRC 13528 / IAM 13628 / NBRC 14792 / USDA 110)).